Reading from the N-terminus, the 683-residue chain is Translation initiation factor IF-2 (683 aa).

The tr-type G domain occupies 182-351 (KRPPVVTVMG…ILTAEMEELK (170 aa)). The G1 stretch occupies residues 191–198 (GHVDHGKT). Position 191–198 (191–198 (GHVDHGKT)) interacts with GTP. Positions 216 to 220 (GITQH) are G2. The interval 237–240 (DTPG) is G3. GTP-binding positions include 237-241 (DTPGH) and 291-294 (NKID). The tract at residues 291–294 (NKID) is G4. The tract at residues 327–329 (SAH) is G5.

It belongs to the TRAFAC class translation factor GTPase superfamily. Classic translation factor GTPase family. IF-2 subfamily.

The protein localises to the cytoplasm. Its function is as follows. One of the essential components for the initiation of protein synthesis. Protects formylmethionyl-tRNA from spontaneous hydrolysis and promotes its binding to the 30S ribosomal subunits. Also involved in the hydrolysis of GTP during the formation of the 70S ribosomal complex. The polypeptide is Translation initiation factor IF-2 (Clostridium novyi (strain NT)).